A 395-amino-acid chain; its full sequence is Acid ceramidase (395 aa).

A signal peptide spans 1-21 (MLGRSRLALVLLAAAVSCAVA). Cysteine 31 and cysteine 340 are disulfide-bonded. The Nucleophile role is filled by cysteine 143. Residues asparagine 173, asparagine 195, asparagine 259, asparagine 286, asparagine 342, and asparagine 348 are each glycosylated (N-linked (GlcNAc...) asparagine). A disulfide bond links cysteine 388 and cysteine 392.

This sequence belongs to the acid ceramidase family. In terms of assembly, heterodimer; disulfide-linked. The heterodimer is composed of the disulfide-linked alpha and beta chains produced by autocatalytic cleavage of the precursor. N-glycosylated. Post-translationally, proteolytically cleaved into two chains alpha and beta that remain associated via a disulfide bond. Cleavage gives rise to a conformation change that activates the enzyme. The same catalytic Cys residue mediates the autoproteolytic cleavage and subsequent hydrolysis of lipid substrates. The beta chain may undergo an additional C-terminal processing.

It localises to the lysosome. Its subcellular location is the secreted. The catalysed reaction is an N-acylsphing-4-enine + H2O = sphing-4-enine + a fatty acid. The enzyme catalyses N-dodecanoylsphing-4-enine + H2O = dodecanoate + sphing-4-enine. It carries out the reaction N-tetradecanoylsphing-4-enine + H2O = tetradecanoate + sphing-4-enine. It catalyses the reaction N-hexadecanoylsphing-4-enine + H2O = sphing-4-enine + hexadecanoate. The catalysed reaction is N-octadecanoylsphing-4-enine + H2O = sphing-4-enine + octadecanoate. The enzyme catalyses N-dodecanoyl-(4R)-hydroxysphinganine + H2O = (4R)-hydroxysphinganine + dodecanoate. It carries out the reaction N-(dodecanoyl)-sphinganine + H2O = dodecanoate + sphinganine. It catalyses the reaction N-(acetyl)-sphing-4-enine + H2O = sphing-4-enine + acetate. The catalysed reaction is N-(hexanoyl)sphing-4-enine + H2O = hexanoate + sphing-4-enine. The enzyme catalyses N-octanoylsphing-4-enine + H2O = octanoate + sphing-4-enine. It carries out the reaction N-(9Z-octadecenoyl)-sphing-4-enine + H2O = sphing-4-enine + (9Z)-octadecenoate. It catalyses the reaction N-dodecanoylethanolamine + H2O = dodecanoate + ethanolamine. It participates in lipid metabolism; sphingolipid metabolism. In terms of biological role, lysosomal ceramidase that hydrolyzes sphingolipid ceramides into sphingosine and free fatty acids at acidic pH. Ceramides, sphingosine, and its phosphorylated form sphingosine-1-phosphate are bioactive lipids that mediate cellular signaling pathways regulating several biological processes including cell proliferation, apoptosis and differentiation. Has a higher catalytic efficiency towards C12-ceramides versus other ceramides. Also catalyzes the reverse reaction allowing the synthesis of ceramides from fatty acids and sphingosine. For the reverse synthetic reaction, the natural sphingosine D-erythro isomer is more efficiently utilized as a substrate compared to D-erythro-dihydrosphingosine and D-erythro-phytosphingosine, while the fatty acids with chain lengths of 12 or 14 carbons are the most efficiently used. Also has an N-acylethanolamine hydrolase activity. By regulating the levels of ceramides, sphingosine and sphingosine-1-phosphate in the epidermis, mediates the calcium-induced differentiation of epidermal keratinocytes. Also indirectly regulates tumor necrosis factor/TNF-induced apoptosis. By regulating the intracellular balance between ceramides and sphingosine, in adrenocortical cells, probably also acts as a regulator of steroidogenesis. The protein is Acid ceramidase of Macaca fascicularis (Crab-eating macaque).